The primary structure comprises 657 residues: Cyclic-di-AMP phosphodiesterase PdeA (657 aa).

The next 2 membrane-spanning stretches (helical) occupy residues 13 to 35 (PLYG…SWWL) and 37 to 53 (ALVV…MFYF). Residues 74–137 (RSEEEALVEM…ITGNDEKGIM (64 aa)) form a PAS-like region. Positions 175-303 (NKSVFAVIFL…GGDQVVIKQP (129 aa)) constitute a GGDEF domain. The DHH stretch occupies residues 342-498 (VFVMGHRYPD…IEATALLSGI (157 aa)). Mn(2+) is bound by residues His347, Asp351, Asp353, Asp422, His446, and Asp501. Residues 592 to 645 (VITLRPDKLIGISARSLGQINVQVIMEKLGGGGHLSNAATQLKDVTIAEAEKQL) form a DHHA1 region.

It belongs to the GdpP/PdeA phosphodiesterase family. The cofactor is heme b. Requires Mn(2+) as cofactor.

Its subcellular location is the cell membrane. It catalyses the reaction 3',3'-c-di-AMP + H2O = 5'-O-phosphonoadenylyl-(3'-&gt;5')-adenosine + H(+). In terms of biological role, has phosphodiesterase (PDE) activity against cyclic-di-AMP (c-di-AMP). Overexpression decreases export of c-di-AMP, leads to slightly increased susceptibility to the antibiotic cefuroxime and somewhat slower growth in macrophages. There are at least 2 PDEs for c-di-AMP in this bacteria (this one and pgpH); this may be the major PDE for intracellular growth in host macrophages. During host infection c-di-AMP is secreted into the host cytoplasm which leads to interferon-beta production and secretion by the host. c-di-AMP is a second messenger that mediates growth, cell wall stability and virulence. May monitor cellular heme or NO levels. In Listeria monocytogenes serotype 1/2a (strain 10403S), this protein is Cyclic-di-AMP phosphodiesterase PdeA.